Consider the following 432-residue polypeptide: MQVSVETTQGLGRRVTITIAADSIENAVKSELVNVAKKVRIDGFRKGKVPMNVVAQRYGASVRQDVLGDLMSRHFVDAIIKEKINPAGAPNYVPGEYKLGEDFTYAVEFEVYPEVELKGLESIEVEKPVVEVTDADVDTMLDTLRKQQATWKDKDGAADAEDRVTIDFTGSVDGEEFEGGKATDFVLAMGQGRMIPGFEEGIKGHKAGEEFTIDVTFPEEYHAENLKGKAAKFVINLKKVEERELPELTEEFIKRFGVEDGSVAGLRAEVRKNMERELKGAVRNRIKSQAIEGLVNANNIDVPAALIDGEIDVLRRQAAQRFGGNEKQALELPRELFEEQAKRRVVVGLLLGEVIRTHELKADEDRVKALIEEMASAYEDPSEVIEFYSKNNELMDNMRNVALEEQAVEAVLAKAKVTEKPTSFNELMNQQA.

Residues 161-246 (EDRVTIDFTG…LKKVEERELP (86 aa)) enclose the PPIase FKBP-type domain.

Belongs to the FKBP-type PPIase family. Tig subfamily.

It is found in the cytoplasm. The catalysed reaction is [protein]-peptidylproline (omega=180) = [protein]-peptidylproline (omega=0). In terms of biological role, involved in protein export. Acts as a chaperone by maintaining the newly synthesized protein in an open conformation. Functions as a peptidyl-prolyl cis-trans isomerase. In Cronobacter sakazakii (strain ATCC BAA-894) (Enterobacter sakazakii), this protein is Trigger factor.